A 144-amino-acid chain; its full sequence is Large ribosomal subunit protein uL16 (144 aa).

The span at 1 to 19 (MLLPKRVKYRRQHRPKTTG) shows a compositional bias: basic residues. Residues 1–23 (MLLPKRVKYRRQHRPKTTGRSKG) are disordered.

The protein belongs to the universal ribosomal protein uL16 family. In terms of assembly, part of the 50S ribosomal subunit.

Functionally, binds 23S rRNA and is also seen to make contacts with the A and possibly P site tRNAs. This is Large ribosomal subunit protein uL16 from Staphylococcus aureus (strain Mu50 / ATCC 700699).